The primary structure comprises 310 residues: Olfactory receptor 2A4 (310 aa).

Topologically, residues 1–24 (MGDNITSIREFLLLGFPVGPRIQM) are extracellular. The N-linked (GlcNAc...) asparagine glycan is linked to Asn-4. Residues 25–48 (LLFGLFSLFYVFTLLGNGTILGLI) form a helical membrane-spanning segment. At 49-56 (SLDSRLHA) the chain is on the cytoplasmic side. A helical transmembrane segment spans residues 57 to 78 (PMYFFLSHLAVVDIAYACNTVP). Residues 79 to 99 (RMLVNLLHPAKPISFAGRMMQ) are Extracellular-facing. Residues 100–119 (TFLFSTFAVTECLLLVVMSY) traverse the membrane as a helical segment. Over 120–138 (DLYVAICHPLRYLAIMTWR) the chain is Cytoplasmic. The helical transmembrane segment at 139–157 (VCITLAVTSWTTGVLLSLI) threads the bilayer. Residues 158–194 (HLVLLLPLPFCRPQKIYHFFCEILAVLKLACADTHIN) are Extracellular-facing. A helical transmembrane segment spans residues 195 to 218 (ENMVLAGAISGLVGPLSTIVVSYM). Residues 219–235 (CILCAILQIQSREVQRK) lie on the Cytoplasmic side of the membrane. The helical transmembrane segment at 236–258 (AFRTCFSHLCVIGLVYGTAIIMY) threads the bilayer. Over 259 to 271 (VGPRYGNPKEQKK) the chain is Extracellular. A helical membrane pass occupies residues 272–291 (YLLLFHSLFNPMLNPLICSL). Over 292–310 (RNSEVKNTLKRVLGVERAL) the chain is Cytoplasmic.

This sequence belongs to the G-protein coupled receptor 1 family.

It localises to the cell membrane. In terms of biological role, odorant receptor. The sequence is that of Olfactory receptor 2A4 (OR2A4) from Homo sapiens (Human).